The following is a 311-amino-acid chain: Probable manganese-dependent inorganic pyrophosphatase (311 aa).

Residues His9, Asp13, Asp15, Asp75, His97, and Asp149 each coordinate Mn(2+).

The protein belongs to the PPase class C family. Mn(2+) serves as cofactor.

It is found in the cytoplasm. It catalyses the reaction diphosphate + H2O = 2 phosphate + H(+). The protein is Probable manganese-dependent inorganic pyrophosphatase of Lactobacillus acidophilus (strain ATCC 700396 / NCK56 / N2 / NCFM).